A 189-amino-acid polypeptide reads, in one-letter code: Large ribosomal subunit protein bL9 (189 aa).

This sequence belongs to the bacterial ribosomal protein bL9 family.

In terms of biological role, binds to the 23S rRNA. The chain is Large ribosomal subunit protein bL9 from Brucella canis (strain ATCC 23365 / NCTC 10854 / RM-666).